Here is a 794-residue protein sequence, read N- to C-terminus: uncharacterized protein (794 aa).

Helical transmembrane passes span 34–54 (FSAS…VFAV), 67–87 (ITAA…AHLI), 99–119 (MLAD…AFAS), 132–152 (LFLF…ADVT), 257–277 (VGPS…AMGL), 283–303 (LAWI…MFQL), 315–335 (WSVN…VLVF), 353–373 (LGAL…ATLF), and 421–441 (WTGT…LMGV).

It localises to the cell membrane. This is an uncharacterized protein from Corynebacterium glutamicum (strain ATCC 13032 / DSM 20300 / JCM 1318 / BCRC 11384 / CCUG 27702 / LMG 3730 / NBRC 12168 / NCIMB 10025 / NRRL B-2784 / 534).